The primary structure comprises 378 residues: Dual-specificity RNA methyltransferase RlmN (378 aa).

The active-site Proton acceptor is the Glu-97. Residues 103–341 (EGDRATLCVS…VMVRKTRGDD (239 aa)) enclose the Radical SAM core domain. Cys-110 and Cys-346 are oxidised to a cystine. Cys-117, Cys-121, and Cys-124 together coordinate [4Fe-4S] cluster. S-adenosyl-L-methionine is bound by residues 171–172 (GE), Ser-203, 225–227 (SLH), and Asn-303. Cys-346 acts as the S-methylcysteine intermediate in catalysis.

The protein belongs to the radical SAM superfamily. RlmN family. [4Fe-4S] cluster is required as a cofactor.

The protein resides in the cytoplasm. It carries out the reaction adenosine(2503) in 23S rRNA + 2 reduced [2Fe-2S]-[ferredoxin] + 2 S-adenosyl-L-methionine = 2-methyladenosine(2503) in 23S rRNA + 5'-deoxyadenosine + L-methionine + 2 oxidized [2Fe-2S]-[ferredoxin] + S-adenosyl-L-homocysteine. The catalysed reaction is adenosine(37) in tRNA + 2 reduced [2Fe-2S]-[ferredoxin] + 2 S-adenosyl-L-methionine = 2-methyladenosine(37) in tRNA + 5'-deoxyadenosine + L-methionine + 2 oxidized [2Fe-2S]-[ferredoxin] + S-adenosyl-L-homocysteine. Functionally, specifically methylates position 2 of adenine 2503 in 23S rRNA and position 2 of adenine 37 in tRNAs. m2A2503 modification seems to play a crucial role in the proofreading step occurring at the peptidyl transferase center and thus would serve to optimize ribosomal fidelity. This Idiomarina loihiensis (strain ATCC BAA-735 / DSM 15497 / L2-TR) protein is Dual-specificity RNA methyltransferase RlmN.